The sequence spans 151 residues: Spore coat polysaccharide biosynthesis protein SpsL (151 aa).

To dTDP-4-dehydrorhamnose reductase.

It participates in spore coat biogenesis; spore coat polysaccharide biosynthesis. The sequence is that of Spore coat polysaccharide biosynthesis protein SpsL (spsL) from Bacillus subtilis (strain 168).